The following is a 443-amino-acid chain: Cysteine proteinase B (443 aa).

The signal sequence occupies residues 1–27; sequence MATSRAALCAVAVVCVVLAAACAPARA. A propeptide spans 28 to 125 (activation peptide); sequence IHVGTPAAAL…YRKARADLSA (98 aa). 2 disulfides stabilise this stretch: Cys147–Cys188 and Cys181–Cys226. Residue Cys150 is part of the active site. N-linked (GlcNAc...) asparagine glycosylation occurs at Asn228. Cys281 and Cys329 are oxidised to a cystine. Catalysis depends on residues His288 and Asn308.

It belongs to the peptidase C1 family.

The sequence is that of Cysteine proteinase B (LMCPB) from Leishmania mexicana.